The sequence spans 627 residues: Neutral endopeptidase (627 aa).

One can recognise a Peptidase M13 domain in the interval 1 to 627 (MTRIQDDLFA…RAPENRLKIW (627 aa)). A Zn(2+)-binding site is contributed by H475. Residue E476 is part of the active site. The Zn(2+) site is built by H479 and E535. Catalysis depends on D539, which acts as the Proton donor.

It belongs to the peptidase M13 family. As to quaternary structure, monomer. Zn(2+) serves as cofactor.

In terms of biological role, endopeptidase with broad substrate specificity for several oligopeptides. The protein is Neutral endopeptidase (pepO) of Lactococcus lactis subsp. lactis (strain IL1403) (Streptococcus lactis).